Reading from the N-terminus, the 554-residue chain is Cytochrome c oxidase subunit 1-alpha (554 aa).

A helical membrane pass occupies residues 26-56 (KDIGVLYLFTAGLAGLISVTLTVYMRMELQH). Cysteine 63 and cysteine 77 form a disulfide bridge. 6 helical membrane-spanning segments follow: residues 81–118 (AHLWNVVVTYHGILMMFFVVIPALFGGFGNYFMPLHIG), 127–148 (LNNLSYWLYVCGVSLAIASLLS), 175–203 (AMDLAIFAVHVSGATSILGAINIITTFLN), 215–248 (PLFAWAVFITAWMILLSLPVLAGGITMLLMDRNF), 260–295 (DPVLYQHILWFFGHPEVYMLILPGFGIISHVISTFA), and 301–319 (GYLPMVLAMAAIAFLGFIV). Residue histidine 91 coordinates Fe(II)-heme a. Positions 273 and 277 each coordinate Cu cation. Residues 273 to 277 (HPEVY) constitute a cross-link (1'-histidyl-3'-tyrosine (His-Tyr)). Residues histidine 322 and histidine 323 each coordinate Cu cation. 5 helical membrane passes run 331 to 359 (LTQQTYFQMATMTIAVPTGIKVFSWIATM), 367 to 390 (KTPMLWALAFLFTVGGVTGVVIAQ), 399 to 425 (DTYYIVAHFHYVMSLGALFAIFAGTYY), 436 to 463 (PEWAGQLHFWMMFIGSNLIFFPQHFLGR), and 478 to 508 (SYWNNISSIGAYISFASFLFFIGIVFYTLFA). Histidine 406 serves as a coordination point for heme a3. Residue histidine 408 coordinates Fe(II)-heme a.

This sequence belongs to the heme-copper respiratory oxidase family. It depends on Cu(2+) as a cofactor. Heme is required as a cofactor.

It is found in the cell inner membrane. It catalyses the reaction 4 Fe(II)-[cytochrome c] + O2 + 8 H(+)(in) = 4 Fe(III)-[cytochrome c] + 2 H2O + 4 H(+)(out). The protein operates within energy metabolism; oxidative phosphorylation. In terms of biological role, subunit I and II form the functional core of the enzyme complex. Electrons originating in cytochrome c are transferred via heme a and Cu(A) to the binuclear center formed by heme a3 and Cu(B). This cytochrome c oxidase shows proton pump activity across the membrane in addition to the electron transfer. The sequence is that of Cytochrome c oxidase subunit 1-alpha (ctaDI) from Paracoccus denitrificans.